The primary structure comprises 664 residues: Protein-arginine deiminase type-3 (664 aa).

The protein belongs to the protein arginine deiminase family. Ca(2+) serves as cofactor. Epidermis and hair follicles.

It localises to the cytoplasm. It carries out the reaction L-arginyl-[protein] + H2O = L-citrullyl-[protein] + NH4(+). Its function is as follows. Catalyzes the deimination of arginine residues of proteins. The protein is Protein-arginine deiminase type-3 (Padi3) of Mus musculus (Mouse).